Reading from the N-terminus, the 122-residue chain is Large ribosomal subunit protein uL14 (122 aa).

It belongs to the universal ribosomal protein uL14 family. In terms of assembly, part of the 50S ribosomal subunit. Forms a cluster with proteins L3 and L19. In the 70S ribosome, L14 and L19 interact and together make contacts with the 16S rRNA in bridges B5 and B8.

Functionally, binds to 23S rRNA. Forms part of two intersubunit bridges in the 70S ribosome. This Francisella tularensis subsp. holarctica (strain LVS) protein is Large ribosomal subunit protein uL14.